The chain runs to 401 residues: Protein nanos (401 aa).

Positions 181 to 207 (LGRMSYGSAPPQVQMPPQQQHQQQQGL) are disordered. Low complexity predominate over residues 190–205 (PPQVQMPPQQQHQQQQ). A Nanos-type zinc finger spans residues 318–372 (HCVFCENNNEPEAVINSHSVRDNFNRVLCPKLRTYVCPICGASGDSAHTIKYCPK). 8 residues coordinate Zn(2+): Cys319, Cys322, His335, Cys346, Cys354, Cys357, His365, and Cys370. 2 short sequence motifs (C2HC) span residues 319–346 (CVFCENNNEPEAVINSHSVRDNFNRVLC) and 354–370 (CPICGASGDSAHTIKYC).

It belongs to the nanos family. Interacts with pum and brat. Interacts with cup. Interacts with mei-P26; possibly involved in regulation of brat levels. Interacts with wh; may be involved in mei-P26-dependent derepression of the BMP signaling pathway. Acts via the formation of a quaternary complex composed of pum, nanos, brat and the 3'-UTR mRNA of hb. Binds RNA with no specificity. In terms of tissue distribution, posterior part of the embryo. While the transcript is present throughout the embryo, nanos translation is controlled by smg, and the protein is found in pole plasm and pole cells. In the female ovary expressed in germline stem cells, precystoblasts and in maturing cystoblasts; in early cystoblasts expression is post-transcriptionally repressed by bam in a 3'UTR-dependent manner.

Its subcellular location is the cytoplasm. The protein localises to the cytoplasmic ribonucleoprotein granule. In terms of biological role, maternal RNA-binding protein that is required for germ cells proliferation and self-renewal. Acts by forming a complex with pum and brat that regulates translation and mRNA stability. The complex binds to the Nanos Response Element (NRE), a 16 bp sequence in the hb mRNA 3'-UTR and prevents its translation. Controls posterior development. Rescuing factor for the abdominal defect of posterior group mutants. The other posterior group genes are not required for nanos function but rather play a role in localization or distribution of nanos protein. The protein is Protein nanos of Drosophila melanogaster (Fruit fly).